Here is a 405-residue protein sequence, read N- to C-terminus: uncharacterized protein (405 aa).

The next 13 membrane-spanning stretches (helical) occupy residues 19–39 (IVSIVMFNFASYLTIGLPLAV), 48–68 (MGFSAFWAGLIISLQYFATLL), 85–105 (IVVFGLCGCFLSGLGYLLADI), 106–126 (ASAWPMISLLLLGLGRVILGI), 129–149 (SFAGTGSTLWGVGVVGSLHIG), 156–176 (GIVTYGAMAMGAPLGVLCYAW), 178–198 (GLQGLALTVMGVALLAVLLAL), 224–244 (GMALALASAGFGVIATFITLF), 252–272 (GAAFALTLFSVAFVGTRLLFP), 283–303 (VAMICFGVEIIGLLLVGTAAM), 309–329 (IGVLLTGMGFSLVFPALGVVA), 344–364 (TYTVFMDMSLGVTGPLAGLVM), and 366–386 (WAGVPVIYLAAAGLVAMALLL).

The protein belongs to the major facilitator superfamily. YhhS family.

Its subcellular location is the cell inner membrane. This is an uncharacterized protein from Salmonella enteritidis PT4 (strain P125109).